The following is a 155-amino-acid chain: UPF0178 protein RHE_CH02229 (155 aa).

The protein belongs to the UPF0178 family.

In Rhizobium etli (strain ATCC 51251 / DSM 11541 / JCM 21823 / NBRC 15573 / CFN 42), this protein is UPF0178 protein RHE_CH02229.